Here is a 458-residue protein sequence, read N- to C-terminus: MNQYLFLLPEITLFILSCLLLFLKSRNEFGLIAVLITLAATFFSQTCTSVEILNGMLLISPFTQNVKLVILAFTCVFFIQAIAVKQSYSKNFSVLVLLSLLGMLLSVSSSTLASLYLAVELHSIGQYILACIKHKSIKSAEAGVKYTLLGTFMSAVMIYGISLIFVVSGDLSLKSLFIANSKIHSIGILLFISGLMFKVAAAPFHAWIGDIYEGAPTVSTTFFAVLPKLSLIVVLVSLISNLEPIAYTGSTYSTELMENSQYLRNILFTSGILSIAFGTFSAFGQKNIKRFIGFASIAHVGYMLLGVSNSASLSFGNPGIAYALVYSFTNLGILSVVLMLKDKHITSLKKLRCSNNLVALAFVLLLFSSAGVPPFIGFWSKAYVVKTLVETNHIPTAIFSMLAGVISAFYYARIAKETYFTNMAEENIEASLRHNTLLTSIVVLCALFSTFGFVLLIY.

Helical transmembrane passes span 3 to 23 (QYLF…LLFL), 29 to 49 (FGLI…TCTS), 64 to 84 (QNVK…AIAV), 92 to 112 (FSVL…SSTL), 147 to 167 (TLLG…IFVV), 188 to 208 (ILLF…HAWI), 222 to 242 (FFAV…ISNL), 265 to 285 (NILF…AFGQ), 291 to 311 (FIGF…SNSA), 320 to 340 (IAYA…VLML), 358 to 378 (VALA…FIGF), 394 to 414 (IPTA…YARI), and 437 to 457 (LLTS…VLLI).

This sequence belongs to the complex I subunit 2 family. In terms of assembly, NDH-1 is composed of 14 different subunits. Subunits NuoA, H, J, K, L, M, N constitute the membrane sector of the complex.

It localises to the cell inner membrane. It catalyses the reaction a quinone + NADH + 5 H(+)(in) = a quinol + NAD(+) + 4 H(+)(out). In terms of biological role, NDH-1 shuttles electrons from NADH, via FMN and iron-sulfur (Fe-S) centers, to quinones in the respiratory chain. The immediate electron acceptor for the enzyme in this species is believed to be ubiquinone. Couples the redox reaction to proton translocation (for every two electrons transferred, four hydrogen ions are translocated across the cytoplasmic membrane), and thus conserves the redox energy in a proton gradient. This Neorickettsia risticii (strain Illinois) protein is NADH-quinone oxidoreductase subunit N.